The sequence spans 266 residues: MNEKLPISIAQITDIHLLASESQRLQGISTTESFLAVMKRLEELRPELDLLLMTGDLSDDGTPESYENLQHYLNSLQIATYWLPGNHDCAIAMDKILNLGMVSRRKSFQRGNWNFILLNSSVTDCVYGYLSATTLDWLDSELKMLPNNPTLIALHHPPLSVNSAWIDRSCLQNSQELFAVIDRYPQVKLVLFGHIHQEFRRQRHNVHYLGSPSTCYQFQSQSTTFAINQELPGFRLLKLYADGTWTTKIERVPYSLPIEPTVTVSY.

Residues D14, H16, D56, N86, H155, H194, and H196 each contribute to the Fe cation site. AMP contacts are provided by residues H16, D56, and 86-87 (NH). Residue H196 coordinates AMP.

It belongs to the cyclic nucleotide phosphodiesterase class-III family. Requires Fe(2+) as cofactor. Mn(2+) serves as cofactor.

It catalyses the reaction a nucleoside 3',5'-cyclic phosphate + H2O = a nucleoside 5'-phosphate + H(+). The enzyme catalyses 3',5'-cyclic AMP + H2O = AMP + H(+). It carries out the reaction 3',5'-cyclic GMP + H2O = GMP + H(+). Its activity is regulated as follows. Activated by iron and manganese. Hydrolyzes cAMP to 5'-AMP. Plays an important regulatory role in modulating the intracellular concentration of cAMP, thereby influencing cAMP-dependent processes. Can also hydrolyze cGMP. The protein is 3',5'-cyclic-nucleotide phosphodiesterase alr5338 of Nostoc sp. (strain PCC 7120 / SAG 25.82 / UTEX 2576).